We begin with the raw amino-acid sequence, 471 residues long: Neuraminidase (471 aa).

At 1-6 the chain is on the intravirion side; that stretch reads MNPNQK. The chain crosses the membrane as a helical span at residues 7 to 27; sequence LFALSGVAIALSVMNLLIGIS. The tract at residues 11 to 33 is involved in apical transport and lipid raft association; the sequence is SGVAIALSVMNLLIGISNVGLNV. Topologically, residues 28–471 are virion surface; that stretch reads NVGLNVSLHL…PDGAQIQYFS (444 aa). N-linked (GlcNAc...) asparagine; by host glycans are attached at residues Asn32, Asn47, Asn56, Asn57, Asn67, Asn68, and Asn87. The interval 36–87 is hypervariable stalk region; it reads HLKEKGTKQEENLTCTTITQNNTTVVENTYVNNTTIITKEPDLKAPSYLLLN. The tract at residues 90–471 is head of neuraminidase; it reads LCSVEGWVVI…PDGAQIQYFS (382 aa). 8 cysteine pairs are disulfide-bonded: Cys91/Cys419, Cys123/Cys128, Cys183/Cys230, Cys232/Cys237, Cys278/Cys291, Cys280/Cys289, Cys318/Cys336, and Cys423/Cys450. Arg117 lines the substrate pocket. A glycan (N-linked (GlcNAc...) asparagine; by host) is linked at Asn145. Asp150 (proton donor/acceptor) is an active-site residue. Arg151 contacts substrate. N-linked (GlcNAc...) asparagine; by host glycosylation is found at Asn200 and Asn234. 276 to 277 provides a ligand contact to substrate; the sequence is EE. Residue Arg292 participates in substrate binding. Positions 293, 297, and 324 each coordinate Ca(2+). Arg371 contacts substrate. A glycan (N-linked (GlcNAc...) asparagine; by host) is linked at Asn401. Residue Tyr405 is the Nucleophile of the active site.

The protein belongs to the glycosyl hydrolase 34 family. In terms of assembly, homotetramer. Requires Ca(2+) as cofactor. N-glycosylated.

It localises to the virion membrane. The protein resides in the host apical cell membrane. The enzyme catalyses Hydrolysis of alpha-(2-&gt;3)-, alpha-(2-&gt;6)-, alpha-(2-&gt;8)- glycosidic linkages of terminal sialic acid residues in oligosaccharides, glycoproteins, glycolipids, colominic acid and synthetic substrates.. With respect to regulation, inhibited by the neuraminidase inhibitors zanamivir (Relenza) and oseltamivir (Tamiflu). These drugs interfere with the release of progeny virus from infected cells and are effective against all influenza strains. Resistance to neuraminidase inhibitors is quite rare. Functionally, catalyzes the removal of terminal sialic acid residues from viral and cellular glycoconjugates. Cleaves off the terminal sialic acids on the glycosylated HA during virus budding to facilitate virus release. Additionally helps virus spread through the circulation by further removing sialic acids from the cell surface. These cleavages prevent self-aggregation and ensure the efficient spread of the progeny virus from cell to cell. Otherwise, infection would be limited to one round of replication. Described as a receptor-destroying enzyme because it cleaves a terminal sialic acid from the cellular receptors. May facilitate viral invasion of the upper airways by cleaving the sialic acid moieties on the mucin of the airway epithelial cells. Likely to plays a role in the budding process through its association with lipid rafts during intracellular transport. May additionally display a raft-association independent effect on budding. Plays a role in the determination of host range restriction on replication and virulence. Sialidase activity in late endosome/lysosome traffic seems to enhance virus replication. The sequence is that of Neuraminidase from Influenza A virus (strain A/Duck/Germany/1949 H10N7).